The following is a 186-amino-acid chain: Glutathione-independent glyoxalase DJR-1.2 (186 aa).

Catalysis depends on residues E20, C105, and H124.

This sequence belongs to the peptidase C56 family. DJ-1 subfamily. As to expression, expressed in various tissues, including pharyngeal muscles, pharynx-intestinal valve, ventral nerve cord, spermatheca, rectal gland, inner labial (IL) cells of head neurons, phasmid (PHA/PHB) neurons in tail and supporting sheath/socket cells, as well as in head mesodermal cells (HMC), excretory canals and coelomocytes.

The protein resides in the cytoplasm. The catalysed reaction is methylglyoxal + H2O = (R)-lactate + H(+). Its function is as follows. Catalyzes the conversion of methylglyoxal (MG) or glyoxal (GO) to D-lactate or glycolic acid respectively in a single glutathione (GSH)-independent step. May play a role in detoxifying endogenously produced glyoxals. Involved in protection against glyoxal-induced cell death. Protects dopaminergic neurons from glyoxal-dependent neuronal degeneration. This is Glutathione-independent glyoxalase DJR-1.2 from Caenorhabditis elegans.